A 531-amino-acid polypeptide reads, in one-letter code: Multidrug resistance protein fnx1 (531 aa).

Topologically, residues 1-30 (MVDQVNLATEQTSLLYPEVSRKKEELSVNK) are cytoplasmic. A helical transmembrane segment spans residues 31-51 (WTILPALWVGGFLSALDMTIV). The Lumenal portion of the chain corresponds to 52-225 (ASLYPVIGSE…NASLLSRIDY (174 aa)). Residues 226 to 246 (LGSFLLVTGITALVVTFNMGG) form a helical membrane-spanning segment. Topologically, residues 247 to 252 (DAFPWV) are cytoplasmic. A helical transmembrane segment spans residues 253 to 273 (SPVIITLLVSSVLILFAFYWV). Residues 274–297 (EKNIAVEPIAPVEILSQPTPLNVC) are Lumenal-facing. The chain crosses the membrane as a helical span at residues 298-318 (LGNFFNAFCSFVIVYELPLFF). Over 319–360 (ETTLLMPSSEAGVRIFPYVISTSVGSLCSGLYMKKTGRYRNL) the chain is Cytoplasmic. The chain crosses the membrane as a helical span at residues 361-381 (VIAGFFFMLMGIVSFAVLTSF). The Lumenal segment spans residues 382–385 (GHRT). Residues 386 to 406 (PLILISLCLAMTGCSYGMNLT) form a helical membrane-spanning segment. The Cytoplasmic segment spans residues 407–496 (STLIAIISSL…QKLVIKSYAT (90 aa)). Residues 497–517 (AFTWTFALVAIIAFAGFWCSL) form a helical membrane-spanning segment. At 518 to 531 (RIKQFYLHTSVDRS) the chain is on the lumenal side.

This sequence belongs to the major facilitator superfamily.

Its subcellular location is the vacuole membrane. Efflux transporter. Confers resistance to a variety of toxic compounds. This Schizosaccharomyces pombe (strain 972 / ATCC 24843) (Fission yeast) protein is Multidrug resistance protein fnx1 (fnx1).